The following is an 89-amino-acid chain: MSLTTQETAAIIADYGVKEGDTGSPEVQVALLTSNINKLQGHFADHKKDHHSRRGLLRMVSQRRKLLDYLKGKNVERYQDLIKRLGLRR.

Belongs to the universal ribosomal protein uS15 family. As to quaternary structure, part of the 30S ribosomal subunit. Forms a bridge to the 50S subunit in the 70S ribosome, contacting the 23S rRNA.

Its function is as follows. One of the primary rRNA binding proteins, it binds directly to 16S rRNA where it helps nucleate assembly of the platform of the 30S subunit by binding and bridging several RNA helices of the 16S rRNA. Forms an intersubunit bridge (bridge B4) with the 23S rRNA of the 50S subunit in the ribosome. The polypeptide is Small ribosomal subunit protein uS15 (Pseudoalteromonas atlantica (strain T6c / ATCC BAA-1087)).